The following is a 101-amino-acid chain: Urease subunit beta (101 aa).

Belongs to the urease beta subunit family. As to quaternary structure, heterotrimer of UreA (gamma), UreB (beta) and UreC (alpha) subunits. Three heterotrimers associate to form the active enzyme.

Its subcellular location is the cytoplasm. It catalyses the reaction urea + 2 H2O + H(+) = hydrogencarbonate + 2 NH4(+). It functions in the pathway nitrogen metabolism; urea degradation; CO(2) and NH(3) from urea (urease route): step 1/1. The polypeptide is Urease subunit beta (Acaryochloris marina (strain MBIC 11017)).